A 309-amino-acid polypeptide reads, in one-letter code: Homoserine kinase (309 aa).

85–95 (PYGLGLGSSGS) is an ATP binding site.

The protein belongs to the GHMP kinase family. Homoserine kinase subfamily.

The protein localises to the cytoplasm. It catalyses the reaction L-homoserine + ATP = O-phospho-L-homoserine + ADP + H(+). It functions in the pathway amino-acid biosynthesis; L-threonine biosynthesis; L-threonine from L-aspartate: step 4/5. In terms of biological role, catalyzes the ATP-dependent phosphorylation of L-homoserine to L-homoserine phosphate. This is Homoserine kinase from Thermoplasma volcanium (strain ATCC 51530 / DSM 4299 / JCM 9571 / NBRC 15438 / GSS1).